The primary structure comprises 693 residues: Polyribonucleotide nucleotidyltransferase (693 aa).

2 residues coordinate Mg(2+): Asp489 and Asp495. Residues 556–615 (PQIHVMNINPAKIKDVVGRGGATVKGIVEKTGAQIDTSDSGEVKVFAKDKKSMDMAVAMI) enclose the KH domain. One can recognise an S1 motif domain in the interval 625–693 (GQVYKGKIVK…GRVKLSLVAR (69 aa)).

It belongs to the polyribonucleotide nucleotidyltransferase family. As to quaternary structure, component of the RNA degradosome, which is a multiprotein complex involved in RNA processing and mRNA degradation. Requires Mg(2+) as cofactor.

Its subcellular location is the cytoplasm. The catalysed reaction is RNA(n+1) + phosphate = RNA(n) + a ribonucleoside 5'-diphosphate. In terms of biological role, involved in mRNA degradation. Catalyzes the phosphorolysis of single-stranded polyribonucleotides processively in the 3'- to 5'-direction. The polypeptide is Polyribonucleotide nucleotidyltransferase (Francisella tularensis subsp. novicida (strain U112)).